A 552-amino-acid chain; its full sequence is Steroid transmembrane transporter SLC22A24 (552 aa).

Helical transmembrane passes span 16 to 36 (FQIL…THIL), 144 to 164 (LKSV…LMFG), 175 to 197 (IYTW…PTFV), 201 to 220 (IFRF…AFIL), 232 to 252 (IGIT…GGLA), 255 to 275 (IRDW…LSLL), 349 to 369 (IICF…GLIL), 371 to 391 (LQDL…ITFI), 407 to 427 (INQS…TFLS), 435 to 455 (VVLA…FFVH), 474 to 494 (VFSR…VYSP), and 496 to 516 (LPWV…FCLP).

Belongs to the major facilitator (TC 2.A.1) superfamily. Organic cation transporter (TC 2.A.1.19) family.

It is found in the cell membrane. The enzyme catalyses estrone 3-sulfate(out) + glutarate(in) = estrone 3-sulfate(in) + glutarate(out). It carries out the reaction 17beta-estradiol 17-O-(beta-D-glucuronate)(out) + glutarate(in) = 17beta-estradiol 17-O-(beta-D-glucuronate)(in) + glutarate(out). The catalysed reaction is taurocholate(out) + glutarate(in) = taurocholate(in) + glutarate(out). It catalyses the reaction 5alpha-androstane-3alpha,17beta-diol 3-O-(beta-D-glucuronate)(out) + glutarate(in) = 5alpha-androstane-3alpha,17beta-diol 3-O-(beta-D-glucuronate)(in) + glutarate(out). The enzyme catalyses glycocholate(out) + glutarate(in) = glycocholate(in) + glutarate(out). It carries out the reaction dehydroepiandrosterone 3-sulfate(out) + glutarate(in) = dehydroepiandrosterone 3-sulfate(in) + glutarate(out). The catalysed reaction is glutarate(in) + succinate(out) = glutarate(out) + succinate(in). Functionally, renal transmembrane organic anion/dicarboxylate exchanger that participates in the reabsorption of conjugated steroids, as well as bile acids, driven by an outward gradient of dicarboxylates such as glutarate or succinate. Transports androstanediol glucuronide (5alpha-androstane-3alpha,17beta-diol 3-O-(beta-D-glucuronate)), estrone 3-sulfate, and estradiol-17-glucuronide (17beta-estradiol 17-O-(beta-D-glucuronate)), and taurocholate. This Oryctolagus cuniculus (Rabbit) protein is Steroid transmembrane transporter SLC22A24.